We begin with the raw amino-acid sequence, 327 residues long: Cyclic AMP-responsive element-binding protein 1 (327 aa).

Disordered stretches follow at residues 1-26 (MTMESGAENQQSGDAAVTEAENQQMT) and 94-113 (SEDSQESVDSVTDSQKRREI). The KID domain occupies 87-146 (QISTIAESEDSQESVDSVTDSQKRREILSRRPSYRKILNDLSSDAPGVPRIEEEKSEEET). Position 119 is a phosphoserine; by CaMK1, CaMK2, CaMK4, PKB/AKT1 or PKB/AKT2, RPS6KA3, RPS6KA4, RPS6KA5, SGK1 and TSSK4 (Ser119). A Glycyl lysine isopeptide (Lys-Gly) (interchain with G-Cter in SUMO2) cross-link involves residue Lys122. Positions 125 to 148 (NDLSSDAPGVPRIEEEKSEEETSA) are disordered. At Ser128 the chain carries Phosphoserine. Residue Ser257 is modified to Phosphoserine; by HIPK2. A bZIP domain is found at 269-327 (ARKREVRLMKNREAARECRRKKKEYVKCLENRVAVLENQNKTLIEELKALKDLYCHKSD). The tract at residues 270–295 (RKREVRLMKNREAARECRRKKKEYVK) is basic motif. Residues Lys271 and Lys290 each participate in a glycyl lysine isopeptide (Lys-Gly) (interchain with G-Cter in SUMO1) cross-link. The tract at residues 297 to 318 (LENRVAVLENQNKTLIEELKAL) is leucine-zipper.

This sequence belongs to the bZIP family. Interacts with PPRC1. Binds DNA as a dimer. This dimer is stabilized by magnesium ions. Interacts, through the bZIP domain, with the coactivators CRTC1/TORC1, CRTC2/TORC2 and CRTC3/TORC3. When phosphorylated on Ser-119, binds CREBBP. Interacts with CREBL2; regulates CREB1 phosphorylation, stability and transcriptional activity. Interacts (phosphorylated form) with TOX3. Interacts with ARRB1. Binds to HIPK2. Interacts with SGK1. Interacts with TSSK4; this interaction facilitates phosphorylation on Ser-119. Forms a complex with KMT2A and CREBBP. Interacts with TOX4; CREB1 is required for full induction of TOX4-dependent activity and the interaction is increased by cAMP and inhibited by insulin. In terms of assembly, (Microbial infection) Interacts with hepatitis B virus/HBV protein X. As to quaternary structure, (Microbial infection) Interacts with HTLV-1 protein Tax. Post-translationally, stimulated by phosphorylation. Phosphorylation of both Ser-119 and Ser-128 in the SCN regulates the activity of CREB and participates in circadian rhythm generation. Phosphorylation of Ser-119 allows CREBBP binding. In liver, phosphorylation is induced by fasting or glucagon in a circadian fashion. CREBL2 positively regulates phosphorylation at Ser-119 thereby stimulating CREB1 transcriptional activity. Phosphorylated upon calcium influx by CaMK4 and CaMK2 on Ser-119. CaMK4 is much more potent than CaMK2 in activating CREB. Phosphorylated by CaMK2 on Ser-128. Phosphorylation of Ser-128 blocks CREB-mediated transcription even when Ser-119 is phosphorylated. Phosphorylated by CaMK1. Phosphorylation of Ser-257 by HIPK2 in response to genotoxic stress promotes CREB1 activity, facilitating the recruitment of the coactivator CBP. Phosphorylated at Ser-119 by RPS6KA3, RPS6KA4 and RPS6KA5 in response to mitogenic or stress stimuli. Phosphorylated by TSSK4 on Ser-119. Sumoylated with SUMO1. Sumoylation on Lys-290, but not on Lys-271, is required for nuclear localization of this protein. Sumoylation is enhanced under hypoxia, promoting nuclear localization and stabilization.

The protein resides in the nucleus. Functionally, phosphorylation-dependent transcription factor that stimulates transcription upon binding to the DNA cAMP response element (CRE), a sequence present in many viral and cellular promoters. Transcription activation is enhanced by the TORC coactivators which act independently of Ser-119 phosphorylation. Involved in different cellular processes including the synchronization of circadian rhythmicity and the differentiation of adipose cells. Regulates the expression of apoptotic and inflammatory response factors in cardiomyocytes in response to ERFE-mediated activation of AKT signaling. The polypeptide is Cyclic AMP-responsive element-binding protein 1 (CREB1) (Homo sapiens (Human)).